Consider the following 348-residue polypeptide: Tetraacyldisaccharide 4'-kinase (348 aa).

Position 65 to 72 (65 to 72) interacts with ATP; sequence VAGGAGKT. The disordered stretch occupies residues 89 to 117; that stretch reads PGIVSRGHGSREREARPVSADSTAQSVGD.

Belongs to the LpxK family.

It catalyses the reaction a lipid A disaccharide + ATP = a lipid IVA + ADP + H(+). It participates in glycolipid biosynthesis; lipid IV(A) biosynthesis; lipid IV(A) from (3R)-3-hydroxytetradecanoyl-[acyl-carrier-protein] and UDP-N-acetyl-alpha-D-glucosamine: step 6/6. Transfers the gamma-phosphate of ATP to the 4'-position of a tetraacyldisaccharide 1-phosphate intermediate (termed DS-1-P) to form tetraacyldisaccharide 1,4'-bis-phosphate (lipid IVA). The chain is Tetraacyldisaccharide 4'-kinase from Leptothrix cholodnii (strain ATCC 51168 / LMG 8142 / SP-6) (Leptothrix discophora (strain SP-6)).